The primary structure comprises 395 residues: Cystathionine beta-lyase MetC (395 aa).

Position 210 is an N6-(pyridoxal phosphate)lysine (Lys-210).

It belongs to the trans-sulfuration enzymes family. Homotetramer; dimer of dimers. Pyridoxal 5'-phosphate serves as cofactor.

It is found in the cytoplasm. The catalysed reaction is L,L-cystathionine + H2O = L-homocysteine + pyruvate + NH4(+). The enzyme catalyses L-cysteine + H2O = hydrogen sulfide + pyruvate + NH4(+) + H(+). It carries out the reaction an S-substituted L-cysteine + H2O = a thiol + pyruvate + NH4(+). It functions in the pathway amino-acid biosynthesis; L-methionine biosynthesis via de novo pathway; L-homocysteine from L-cystathionine: step 1/1. Its activity is regulated as follows. L-cysteine inhibits cystathionine beta-lyase activity competitively. Inhibited by aminoethoxyvinylglycine (AVG). Functionally, primarily catalyzes the cleavage of cystathionine to homocysteine, pyruvate and ammonia during methionine biosynthesis. Also exhibits cysteine desulfhydrase activity, producing sulfide from cysteine. In addition, under certain growth conditions, exhibits significant alanine racemase coactivity. This is Cystathionine beta-lyase MetC from Escherichia coli (strain K12).